Consider the following 126-residue polypeptide: MRHYEIVILVHPDQSSQVPAMVERYQSMIKEKDGKVHRLEDWGRRQLAYSIDKVHKAHYLLMNIESDQGVISELENAFRYNDAVIRSLILKRDHAITKSSLIMQGAEKGKSSSKKVAAEAEASEEA.

The tract at residues 104–126 (QGAEKGKSSSKKVAAEAEASEEA) is disordered.

This sequence belongs to the bacterial ribosomal protein bS6 family.

In terms of biological role, binds together with bS18 to 16S ribosomal RNA. The sequence is that of Small ribosomal subunit protein bS6 from Coxiella burnetii (strain Dugway 5J108-111).